A 223-amino-acid chain; its full sequence is Type III pantothenate kinase (223 aa).

Residue 17–24 (DIGNTRIH) participates in ATP binding. Residues tyrosine 81 and 85-88 (GIDR) each bind substrate. Aspartate 87 acts as the Proton acceptor in catalysis. Aspartate 102 serves as a coordination point for K(+). Residue serine 105 participates in ATP binding. Threonine 157 serves as a coordination point for substrate.

It belongs to the type III pantothenate kinase family. In terms of assembly, homodimer. Requires NH4(+) as cofactor. K(+) serves as cofactor.

Its subcellular location is the cytoplasm. It carries out the reaction (R)-pantothenate + ATP = (R)-4'-phosphopantothenate + ADP + H(+). It functions in the pathway cofactor biosynthesis; coenzyme A biosynthesis; CoA from (R)-pantothenate: step 1/5. Functionally, catalyzes the phosphorylation of pantothenate (Pan), the first step in CoA biosynthesis. The protein is Type III pantothenate kinase of Helicobacter pylori (strain J99 / ATCC 700824) (Campylobacter pylori J99).